The following is a 520-amino-acid chain: Amine oxidase [flavin-containing] B (520 aa).

The residue at position 2 (Ser2) is an N-acetylserine. Over 2 to 489 (SNKSDVIVVG…TFLERHLPSV (488 aa)) the chain is Cytoplasmic. N6-acetyllysine occurs at positions 52 and 248. Position 397 is an S-8alpha-FAD cysteine (Cys397). A helical; Anchor for type IV membrane protein membrane pass occupies residues 490 to 516 (PGLLKLFGLTTILSATALGFLAHKRGL). Residues 517 to 520 (FVHF) lie on the Mitochondrial intermembrane side of the membrane.

It belongs to the flavin monoamine oxidase family. Monomer, homo- or heterodimer (containing two subunits of similar size). Each subunit contains a covalently bound flavin. Enzymatically active as monomer. FAD serves as cofactor.

Its subcellular location is the mitochondrion outer membrane. The catalysed reaction is a secondary aliphatic amine + O2 + H2O = a primary amine + an aldehyde + H2O2. It catalyses the reaction (R)-adrenaline + O2 + H2O = (R)-3,4-dihydroxymandelaldehyde + methylamine + H2O2. The enzyme catalyses a primary methyl amine + O2 + H2O = an aldehyde + H2O2 + NH4(+). It carries out the reaction benzylamine + O2 + H2O = benzaldehyde + H2O2 + NH4(+). The catalysed reaction is dopamine + O2 + H2O = 3,4-dihydroxyphenylacetaldehyde + H2O2 + NH4(+). It catalyses the reaction tyramine + O2 + H2O = (4-hydroxyphenyl)acetaldehyde + H2O2 + NH4(+). The enzyme catalyses (R)-noradrenaline + O2 + H2O = (R)-3,4-dihydroxymandelaldehyde + H2O2 + NH4(+). It carries out the reaction 2-phenylethylamine + O2 + H2O = 2-phenylacetaldehyde + H2O2 + NH4(+). The catalysed reaction is N-acetylputrescine + O2 + H2O = 4-acetamidobutanal + H2O2 + NH4(+). Its function is as follows. Catalyzes the oxidative deamination of primary and some secondary amines such as neurotransmitters, and exogenous amines including the tertiary amine, neurotoxin 1-methyl-4-phenyl-1,2,3,6-tetrahydropyridine (MPTP), with concomitant reduction of oxygen to hydrogen peroxide and participates in the metabolism of neuroactive and vasoactive amines in the central nervous system and peripheral tissues. Preferentially degrades benzylamine and phenylethylamine. This is Amine oxidase [flavin-containing] B from Mus musculus (Mouse).